Consider the following 1305-residue polypeptide: Adenylate cyclase type 9 (1305 aa).

Over 1–110 the chain is Cytoplasmic; the sequence is MASPVNQQLL…CFPQTQRRFR (110 aa). Low complexity predominate over residues 46–55; sequence ISSSCSSGES. Residues 46 to 71 are disordered; it reads ISSSCSSGESGVKKTGGSGGARRQKK. A helical membrane pass occupies residues 111 to 131; the sequence is YALMYLSVAGLLWSIYFSVHM. The Extracellular segment spans residues 132–134; the sequence is KTK. The helical transmembrane segment at 135-155 threads the bilayer; the sequence is LVSHLVPTLCFLIVCLGFFFF. Topologically, residues 156–164 are cytoplasmic; that stretch reads TFTKSYARH. A helical transmembrane segment spans residues 165–185; sequence CTAISLLVTLLVFTLTLASQF. The Extracellular segment spans residues 186 to 209; the sequence is QVLNPGLGSDSLSNLTSFSATGSS. Asn199 carries N-linked (GlcNAc...) asparagine glycosylation. The chain crosses the membrane as a helical span at residues 210–229; the sequence is SCLSQVGSFSICVEVLLLLY. Residues 230–235 are Cytoplasmic-facing; that stretch reads TVMHLP. Residues 236–253 form a helical membrane-spanning segment; it reads LYLSACLGVAYSILFETF. The Extracellular segment spans residues 254–274; the sequence is GYHFRDESCFVLLVGRMAHWE. A helical transmembrane segment spans residues 275–295; it reads LLSKALLHVCIHAIGVHLFIM. The Cytoplasmic portion of the chain corresponds to 296–778; the sequence is SEVRSRSTFL…VKTFASATFS (483 aa). Positions 343–369 are disordered; the sequence is QGDDESENSVKRHSASSPKSRKKKSSI. Residues 353–368 are compositionally biased toward basic residues; the sequence is KRHSASSPKSRKKKSS. The Mg(2+) site is built by Asp393, Ile394, and Asp437. ATP-binding positions include 393-398, 435-437, and Arg481; these read DIVGFT and LGD. Composition is skewed to polar residues over residues 607-618 and 670-680; these read SDSHTNCTQPET and ESSTGDTLTNS. Residues 607 to 680 form a disordered region; the sequence is SDSHTNCTQP…SSTGDTLTNS (74 aa). Residues 779–799 form a helical membrane-spanning segment; that stretch reads SLQDVLLNYFIFVLLSVACLL. Over 800 to 810 the chain is Extracellular; that stretch reads KPGTNTVSPPT. Residues 811–831 traverse the membrane as a helical segment; it reads LALVLLSVCGLLGFLSLLVSV. Residues 832–859 lie on the Cytoplasmic side of the membrane; it reads RMAFYLEDMLLCTRRLLEIISGWVPRHF. Residues 860 to 880 form a helical membrane-spanning segment; the sequence is IGTVLVCLPAAVIFSYLSSDF. At 881–883 the chain is on the extracellular side; sequence YTD. A helical membrane pass occupies residues 884-904; it reads IHYTMFLCSALLIPMVQYCNF. Residues 905 to 911 lie on the Cytoplasmic side of the membrane; that stretch reads CQLSSSA. A helical transmembrane segment spans residues 912 to 932; it reads LLLATITGATMLILIYLPLCP. The Extracellular portion of the chain corresponds to 933-966; it reads QRPPLDPGTDIEANLSTSNSSYETLDNPRTELPF. Residues Asn946 and Asn951 are each glycosylated (N-linked (GlcNAc...) asparagine). A helical transmembrane segment spans residues 967-987; sequence TRLGQEIAVAYFLLLLLVWFL. The Cytoplasmic portion of the chain corresponds to 988-1305; it reads NREFDVSYRL…EERGRDGGAR (318 aa). ATP contacts are provided by residues Lys1099, 1176–1178, 1183–1187, and Lys1223; these read DIW and NIASR. A disordered region spans residues 1261–1305; it reads SIGRSPTDEISSLVTGGKGAVELGSGEAERKREKAEERGRDGGAR. Residues 1287 to 1305 show a composition bias toward basic and acidic residues; sequence EAERKREKAEERGRDGGAR.

This sequence belongs to the adenylyl cyclase class-4/guanylyl cyclase family. It depends on Mg(2+) as a cofactor. Mn(2+) serves as cofactor. Detected in oocytes.

Its subcellular location is the cell membrane. The catalysed reaction is ATP = 3',5'-cyclic AMP + diphosphate. Functionally, adenylyl cyclase that catalyzes the formation of the signaling molecule cAMP in response to activation of G protein-coupled receptors. The chain is Adenylate cyclase type 9 (adcy9) from Xenopus laevis (African clawed frog).